The chain runs to 460 residues: Heme sensor protein HssS (460 aa).

The next 2 membrane-spanning stretches (helical) occupy residues 11-31 (IYTITVMIFSAVASFLCTNII) and 164-184 (IFLAILITLLLLFSIILVISS). The HAMP domain maps to 186–238 (YAIIKPIQQLKRATERLMHGNFDEVIHVTRKDEFGTLQYRFDKMRLSLKQLDD). Residues 246-456 (NVSHEIKTPL…TFTITFKKVP (211 aa)) enclose the Histidine kinase domain. Histidine 249 carries the post-translational modification Phosphohistidine; by autocatalysis.

Post-translationally, autophosphorylated.

It is found in the cell membrane. It carries out the reaction ATP + protein L-histidine = ADP + protein N-phospho-L-histidine.. Its function is as follows. Member of the two-component regulatory system HssS/HssR involved in intracellular heme homeostasis and tempering of staphylococcal virulence. HssS functions as a heme sensor histidine kinase which is autophosphorylated at a histidine residue and transfers its phosphate group to an aspartate residue of HssR. HssR/HssS activates the expression of hrtAB, an efflux pump, in response to extracellular heme, hemin, hemoglobin or blood. This chain is Heme sensor protein HssS (hssS), found in Staphylococcus saprophyticus subsp. saprophyticus (strain ATCC 15305 / DSM 20229 / NCIMB 8711 / NCTC 7292 / S-41).